We begin with the raw amino-acid sequence, 750 residues long: MIIRSPEPEVKILVDRDPIKTSFEEWARPGHFSRTIAKGPDTTTWIWNLHADAHDFDSHTSDLEEISRKVFSAHFGQLSIIFLWLSGMYFHGARFSNYEAWLSDPTHIGPSAQVVWPIVGQEILNGDVGGGFRGIQITSGFFQMWRASGITNELQLYCTAIGALVFAALMLFAGWFHYHKAAPKLAWFQDVESMLNHHLAGLLGLGSLSWAGHQVHVSLPINQFLNAGVDPKEIPLPHEFILNRDLLAQLYPSFAEGATPFFTLNWSKYAEFLTFRGGLDPVTGGLWLTDIAHHHLAIAILFLIAGHMYRTNWGIGHGLKDILEAHKGPFTGQGHKGLYEILTTSWHAQLSLNLAMLGSLTIVVAHHMYSMPPYPYLATDYGTQLSLFTHHMWIGGFLIVGAAAHAAIFMVRDYDPTTRYNDLLDRVLRHRDAIISHLNWACIFLGFHSFGLYIHNDTMSALGRPQDMFSDTAIQLQPVFAQWIQNTHALAPSATAPGATTSTSLTWGGGDLVAVGGKVALLPIPLGTADFLVHHIHAFTIHVTVLILLKGVLFARSSRLIPDKANLGFRFPCDGPGRGGTCQVSAWDHVFLGLFWMYNSISVVIFHFSWKMQSDVWGSISDQGVLTHITGGNFAQSSITINGWLRDFLWAQASQVIQSYGSSLSAYGLFFLGAHFVWAFSLMFLFSGRGYWQELIESIVWAHNKLKVAPATQPRALSIVQGRAVGVTHYLLGGIATTWAFFLARIIAVG.

8 consecutive transmembrane segments (helical) span residues V70 to A93, L156 to H179, L195 to L219, I291 to Y309, W346 to Y369, L385 to V411, A433 to H455, and F531 to L549. Residues C573 and C582 each coordinate [4Fe-4S] cluster. Helical transmembrane passes span H589–W610 and L664–F686. A chlorophyll a'-binding site is contributed by H675. The chlorophyll a site is built by M683 and Y691. Residue W692 coordinates phylloquinone. Residues A724–A744 traverse the membrane as a helical segment.

It belongs to the PsaA/PsaB family. As to quaternary structure, the PsaA/B heterodimer binds the P700 chlorophyll special pair and subsequent electron acceptors. PSI consists of a core antenna complex that captures photons, and an electron transfer chain that converts photonic excitation into a charge separation. The eukaryotic PSI reaction center is composed of at least 11 subunits. The cofactor is P700 is a chlorophyll a/chlorophyll a' dimer, A0 is one or more chlorophyll a, A1 is one or both phylloquinones and FX is a shared 4Fe-4S iron-sulfur center..

Its subcellular location is the plastid. The protein localises to the chloroplast thylakoid membrane. The catalysed reaction is reduced [plastocyanin] + hnu + oxidized [2Fe-2S]-[ferredoxin] = oxidized [plastocyanin] + reduced [2Fe-2S]-[ferredoxin]. Functionally, psaA and PsaB bind P700, the primary electron donor of photosystem I (PSI), as well as the electron acceptors A0, A1 and FX. PSI is a plastocyanin-ferredoxin oxidoreductase, converting photonic excitation into a charge separation, which transfers an electron from the donor P700 chlorophyll pair to the spectroscopically characterized acceptors A0, A1, FX, FA and FB in turn. Oxidized P700 is reduced on the lumenal side of the thylakoid membrane by plastocyanin. In Vitis vinifera (Grape), this protein is Photosystem I P700 chlorophyll a apoprotein A1.